The chain runs to 45 residues: U1-ctenitoxin-Pk1a (45 aa).

4 disulfides stabilise this stretch: Cys-3-Cys-16, Cys-10-Cys-25, Cys-15-Cys-34, and Cys-27-Cys-32.

Expressed by the venom gland.

It is found in the secreted. Functionally, neurotoxin. Causes rapid general flaccid paralysis and death in mice at dose levels of 5 ug per mouse. The protein is U1-ctenitoxin-Pk1a of Phoneutria keyserlingi (Brazilian wandering spider).